The following is a 307-amino-acid chain: Urease accessory protein UreD (307 aa).

Belongs to the UreD family. As to quaternary structure, ureD, UreF and UreG form a complex that acts as a GTP-hydrolysis-dependent molecular chaperone, activating the urease apoprotein by helping to assemble the nickel containing metallocenter of UreC. The UreE protein probably delivers the nickel.

The protein localises to the cytoplasm. In terms of biological role, required for maturation of urease via the functional incorporation of the urease nickel metallocenter. The polypeptide is Urease accessory protein UreD (Prochlorococcus marinus (strain NATL1A)).